The sequence spans 323 residues: MVTDKTNASSSSLVDTPADETEVQPPINRRPTFLDRLMRRQTSPSSMEYSESDKKKDGPMENEQSKGVRESSLPPLSQLSLKGYKSSTKRRLLDDELASNIRNLLPARLQLFDEWDLVYSLEQHGVSLNTLYQRSNPDYQLSQLRKNKPEVGYGDSVISSMMSGNVNSMRERRRPQGYVLIIKDENNSKFGCFVNEHLRPMDQKRYYGNGECFLWKSELFTPSPSNSNSEEDISSHLATPQIRFKAFMYTGINDNIIYSNHDFIAIGSSKGQNGLWIDRSLYNGVSYSCDTFGNEILNSNSGDAKIGKFKIMGLELWRVGTLE.

Composition is skewed to polar residues over residues 1–14 and 40–49; these read MVTD…SSLV and RQTSPSSMEY. Residues 1–81 form a disordered region; sequence MVTDKTNASS…SLPPLSQLSL (81 aa). Basic and acidic residues predominate over residues 51–69; that stretch reads ESDKKKDGPMENEQSKGVR. The span at 71–81 shows a compositional bias: low complexity; sequence SSLPPLSQLSL. A TLDc domain is found at 91–320; that stretch reads RLLDDELASN…IMGLELWRVG (230 aa).

Belongs to the OXR1 family.

Its subcellular location is the mitochondrion. In terms of biological role, may be involved in protection from oxidative damage. In Debaryomyces hansenii (strain ATCC 36239 / CBS 767 / BCRC 21394 / JCM 1990 / NBRC 0083 / IGC 2968) (Yeast), this protein is Oxidation resistance protein 1 (OXR1).